The primary structure comprises 202 residues: Small ribosomal subunit protein uS4c (202 aa).

Residues 90-158 (MRSDNVIFRL…ISKNIELYQK (69 aa)) form the S4 RNA-binding domain.

This sequence belongs to the universal ribosomal protein uS4 family. In terms of assembly, part of the 30S ribosomal subunit. Contacts protein S5. The interaction surface between S4 and S5 is involved in control of translational fidelity.

It is found in the plastid. The protein resides in the chloroplast. In terms of biological role, one of the primary rRNA binding proteins, it binds directly to 16S rRNA where it nucleates assembly of the body of the 30S subunit. Its function is as follows. With S5 and S12 plays an important role in translational accuracy. This chain is Small ribosomal subunit protein uS4c (rps4), found in Exsertotheca crispa (Moss).